The sequence spans 216 residues: UPF0502 protein Ent638_1581 (216 aa).

This sequence belongs to the UPF0502 family.

This is UPF0502 protein Ent638_1581 from Enterobacter sp. (strain 638).